The following is a 660-amino-acid chain: UvrABC system protein B (660 aa).

A Helicase ATP-binding domain is found at 25-183 (EGLNKGLKHQ…ALINIHYERN (159 aa)). 38 to 45 (GVTGSGKT) is a binding site for ATP. The Beta-hairpin motif lies at 91–114 (YYDYYQPEAYLPTTDTYIEKDSSV). In terms of domain architecture, Helicase C-terminal spans 431 to 593 (QIDDLIGEVN…IVPQTIHKAL (163 aa)). A UVR domain is found at 622–657 (ADMVIELEAEMHLAAKNLEFERAAALRDNIKELRST).

It belongs to the UvrB family. In terms of assembly, forms a heterotetramer with UvrA during the search for lesions. Interacts with UvrC in an incision complex.

The protein resides in the cytoplasm. Functionally, the UvrABC repair system catalyzes the recognition and processing of DNA lesions. A damage recognition complex composed of 2 UvrA and 2 UvrB subunits scans DNA for abnormalities. Upon binding of the UvrA(2)B(2) complex to a putative damaged site, the DNA wraps around one UvrB monomer. DNA wrap is dependent on ATP binding by UvrB and probably causes local melting of the DNA helix, facilitating insertion of UvrB beta-hairpin between the DNA strands. Then UvrB probes one DNA strand for the presence of a lesion. If a lesion is found the UvrA subunits dissociate and the UvrB-DNA preincision complex is formed. This complex is subsequently bound by UvrC and the second UvrB is released. If no lesion is found, the DNA wraps around the other UvrB subunit that will check the other stand for damage. The sequence is that of UvrABC system protein B from Methanococcoides burtonii (strain DSM 6242 / NBRC 107633 / OCM 468 / ACE-M).